Consider the following 317-residue polypeptide: Methionyl-tRNA formyltransferase (317 aa).

Residue 112-115 (SLLP) participates in (6S)-5,6,7,8-tetrahydrofolate binding.

Belongs to the Fmt family.

The catalysed reaction is L-methionyl-tRNA(fMet) + (6R)-10-formyltetrahydrofolate = N-formyl-L-methionyl-tRNA(fMet) + (6S)-5,6,7,8-tetrahydrofolate + H(+). In terms of biological role, attaches a formyl group to the free amino group of methionyl-tRNA(fMet). The formyl group appears to play a dual role in the initiator identity of N-formylmethionyl-tRNA by promoting its recognition by IF2 and preventing the misappropriation of this tRNA by the elongation apparatus. The sequence is that of Methionyl-tRNA formyltransferase from Geobacter sulfurreducens (strain ATCC 51573 / DSM 12127 / PCA).